Consider the following 412-residue polypeptide: Kelch repeat-containing protein At1g19470 (412 aa).

Positions 1-55 (MVNISEIPDDSNDGCDPNKKPEEQVLRRSRRIATRNENQNKKPKEEEEEDNRSVS) are disordered. The span at 16–26 (DPNKKPEEQVL) shows a compositional bias: basic and acidic residues. Kelch repeat units follow at residues 156–202 (EMYV…VVDG), 203–250 (KIYV…SAHA), 255–291 (KLYM…WDKT), and 292–345 (CCVV…EMAN).

The chain is Kelch repeat-containing protein At1g19470 from Arabidopsis thaliana (Mouse-ear cress).